Here is a 323-residue protein sequence, read N- to C-terminus: Annexin A3 (323 aa).

A2 bears the N-acetylalanine mark. Annexin repeat units follow at residues 18–89, 90–161, 173–245, and 249–320; these read FNPS…ALVT, PPAV…ILAN, QLAR…AIVR, and NTPA…KICG. K177 is modified (N6-acetyllysine). A Phosphothreonine modification is found at T267.

This sequence belongs to the annexin family.

Functionally, inhibitor of phospholipase A2, also possesses anti-coagulant properties. Also cleaves the cyclic bond of inositol 1,2-cyclic phosphate to form inositol 1-phosphate. The protein is Annexin A3 (ANXA3) of Bos taurus (Bovine).